Reading from the N-terminus, the 95-residue chain is MRDARDVLKRPVISEKSVGLIEENKYSFWVDTAANKIEIKNAVEKMFKVKVVDVRTINVDGKKKRVGKHVGRTADRKKAIVTLKAGDRIEGFAGL.

This sequence belongs to the universal ribosomal protein uL23 family. As to quaternary structure, part of the 50S ribosomal subunit. Contacts protein L29, and trigger factor when it is bound to the ribosome.

One of the early assembly proteins it binds 23S rRNA. One of the proteins that surrounds the polypeptide exit tunnel on the outside of the ribosome. Forms the main docking site for trigger factor binding to the ribosome. The polypeptide is Large ribosomal subunit protein uL23 (Desulfitobacterium hafniense (strain DSM 10664 / DCB-2)).